Consider the following 747-residue polypeptide: Polyribonucleotide nucleotidyltransferase (747 aa).

Positions 502 and 508 each coordinate Mg(2+). The KH domain maps to 569-628 (PRMLTITIDPDKIRDIIGPGGKIIKKIIEETGVEIDVEDDGRVFIASTDAAAGERALKII). One can recognise an S1 motif domain in the interval 638–712 (GKVYNGKVTR…PQGRLKLSRK (75 aa)). The disordered stretch occupies residues 718–747 (STVGEGGHRHFRRAGREGGHRGLNNRRQSR).

Belongs to the polyribonucleotide nucleotidyltransferase family. It depends on Mg(2+) as a cofactor.

It is found in the cytoplasm. It catalyses the reaction RNA(n+1) + phosphate = RNA(n) + a ribonucleoside 5'-diphosphate. Its function is as follows. Involved in mRNA degradation. Catalyzes the phosphorolysis of single-stranded polyribonucleotides processively in the 3'- to 5'-direction. The protein is Polyribonucleotide nucleotidyltransferase of Moorella thermoacetica (strain ATCC 39073 / JCM 9320).